The sequence spans 240 residues: Coatomer subunit delta (240 aa).

Residues 215–226 (AAAKASSAPKAK) show a composition bias toward low complexity. The tract at residues 215–240 (AAAKASSAPKAKGMQLGKKKNTSLLY) is disordered. The segment covering 231-240 (GKKKNTSLLY) has biased composition (basic residues).

The protein belongs to the adaptor complexes medium subunit family. Delta-COP subfamily. Oligomeric complex that consists of at least the alpha, beta, beta', gamma, delta, epsilon and zeta subunits.

Its subcellular location is the cytoplasm. It is found in the nucleus. The coatomer is a cytosolic protein complex that binds to dilysine motifs and reversibly associates with Golgi non-clathrin-coated vesicles, which further mediate biosynthetic protein transport from the ER, via the Golgi up to the trans Golgi network. Coatomer complex is required for budding from Golgi membranes, and is essential for the retrograde Golgi-to-ER transport of dilysine-tagged proteins. This chain is Coatomer subunit delta (ret2), found in Schizosaccharomyces pombe (strain 972 / ATCC 24843) (Fission yeast).